The primary structure comprises 450 residues: Probable glucoamylase (450 aa).

A signal peptide spans 1–16 (MRTYWLFLLLGGVVSA). Positions 17 to 28 (ESLLSPNKRSKE) are excised as a propeptide. W147 lines the substrate pocket. The Proton acceptor role is filled by D203. Residue E206 is the Proton donor of the active site. N-linked (GlcNAc...) asparagine glycans are attached at residues N383 and N409.

This sequence belongs to the glycosyl hydrolase 15 family.

It catalyses the reaction Hydrolysis of terminal (1-&gt;4)-linked alpha-D-glucose residues successively from non-reducing ends of the chains with release of beta-D-glucose.. The protein is Probable glucoamylase (meu17) of Schizosaccharomyces pombe (strain 972 / ATCC 24843) (Fission yeast).